The chain runs to 201 residues: Putative manganese efflux pump MntP 2 (201 aa).

6 helical membrane-spanning segments follow: residues Leu-3 to Thr-23, Ile-39 to Ile-59, Ile-65 to Ile-85, Leu-116 to Phe-136, Ile-141 to Met-161, and Ile-176 to Ile-196.

This sequence belongs to the MntP (TC 9.B.29) family.

The protein resides in the cell membrane. Its function is as follows. Probably functions as a manganese efflux pump. This chain is Putative manganese efflux pump MntP 2, found in Clostridium botulinum (strain Langeland / NCTC 10281 / Type F).